Here is a 101-residue protein sequence, read N- to C-terminus: Urease subunit beta (101 aa).

The protein belongs to the urease beta subunit family. In terms of assembly, heterotrimer of UreA (gamma), UreB (beta) and UreC (alpha) subunits. Three heterotrimers associate to form the active enzyme.

Its subcellular location is the cytoplasm. It carries out the reaction urea + 2 H2O + H(+) = hydrogencarbonate + 2 NH4(+). The protein operates within nitrogen metabolism; urea degradation; CO(2) and NH(3) from urea (urease route): step 1/1. The protein is Urease subunit beta of Rhizobium leguminosarum bv. trifolii (strain WSM2304).